A 598-amino-acid polypeptide reads, in one-letter code: Cytochrome P450 monooxygenase phmB (598 aa).

A helical transmembrane segment spans residues 107-127 (VAAKIAALLFVAGLFWAVSVL). N-linked (GlcNAc...) asparagine glycosylation is found at N171, N428, and N494. C542 is a binding site for heme. N-linked (GlcNAc...) asparagine glycosylation is found at N549 and N581.

This sequence belongs to the cytochrome P450 family. It depends on heme as a cofactor.

Its subcellular location is the membrane. Its pathway is mycotoxin biosynthesis. Its function is as follows. Cytochrome P450 monooxygenase; part of the gene cluster that mediates the biosynthesis of the mycotoxins phomacins, leucine-derived cytochalasans with potent actin polymerization-inhibitory activities and monocot-specific antigerminative activities. The first step in the pathway is catalyzed by the hybrid PKS-NRPS phmA, assisted by the enoyl reductase phmE, that are responsible for fusion of the leucine precursor and the polyketide backbone to produce a 2-pyrrolidone intermediate. The polyketide synthase module (PKS) of phmA is responsible for the synthesis of the polyketide backbone and the downstream nonribosomal peptide synthetase (NRPS) amidates the carboxyl end of the polyketide with the leucine precursor. Because phmA lacks a designated enoylreductase (ER) domain, the required activity is provided the enoyl reductase phmE. Reduction by the hydrolyase phmG, followed by dehydration and intra-molecular Diels-Alder cyclization by the Diels-Alderase phmD then yield the required isoindolone-fused macrocycle. A number of oxidative steps catalyzed by the tailoring cytochrome P450 monooxygenase phmB, the FAD-linked oxidoreductase phmC and the short-chain dehydrogenase/reductase phmF, are further required to afford the final products, phomacin D and phomacin E. This is Cytochrome P450 monooxygenase phmB from Phaeosphaeria nodorum (strain SN15 / ATCC MYA-4574 / FGSC 10173) (Glume blotch fungus).